The chain runs to 79 residues: Sec-independent protein translocase protein TatA (79 aa).

Residues 1 to 21 (MGGWSSPSHWLIILLIVVLLF) form a helical membrane-spanning segment. Over residues 52–61 (KNTQKIEENK) the composition is skewed to basic and acidic residues. The segment at 52 to 79 (KNTQKIEENKNTTNNTSADASIDKTKKA) is disordered.

The protein belongs to the TatA/E family. In terms of assembly, the Tat system comprises two distinct complexes: a TatABC complex, containing multiple copies of TatA, TatB and TatC subunits, and a separate TatA complex, containing only TatA subunits. Substrates initially bind to the TatABC complex, which probably triggers association of the separate TatA complex to form the active translocon.

The protein localises to the cell inner membrane. Part of the twin-arginine translocation (Tat) system that transports large folded proteins containing a characteristic twin-arginine motif in their signal peptide across membranes. TatA could form the protein-conducting channel of the Tat system. The polypeptide is Sec-independent protein translocase protein TatA (Campylobacter jejuni subsp. jejuni serotype O:6 (strain 81116 / NCTC 11828)).